The sequence spans 917 residues: Protein translocase subunit SecA (917 aa).

ATP is bound by residues Gln87, 105 to 109 (GEGKT), and Asp501. Residues Cys901, Cys903, Cys912, and His913 each contribute to the Zn(2+) site.

This sequence belongs to the SecA family. Monomer and homodimer. Part of the essential Sec protein translocation apparatus which comprises SecA, SecYEG and auxiliary proteins SecDF-YajC and YidC. Requires Zn(2+) as cofactor.

Its subcellular location is the cell inner membrane. The protein resides in the cytoplasm. The enzyme catalyses ATP + H2O + cellular proteinSide 1 = ADP + phosphate + cellular proteinSide 2.. Part of the Sec protein translocase complex. Interacts with the SecYEG preprotein conducting channel. Has a central role in coupling the hydrolysis of ATP to the transfer of proteins into and across the cell membrane, serving both as a receptor for the preprotein-SecB complex and as an ATP-driven molecular motor driving the stepwise translocation of polypeptide chains across the membrane. This is Protein translocase subunit SecA from Granulibacter bethesdensis (strain ATCC BAA-1260 / CGDNIH1).